Consider the following 246-residue polypeptide: 1-(5-phosphoribosyl)-5-[(5-phosphoribosylamino)methylideneamino] imidazole-4-carboxamide isomerase (246 aa).

Residue aspartate 8 is the Proton acceptor of the active site. Catalysis depends on aspartate 129, which acts as the Proton donor.

The protein belongs to the HisA/HisF family.

It is found in the cytoplasm. It catalyses the reaction 1-(5-phospho-beta-D-ribosyl)-5-[(5-phospho-beta-D-ribosylamino)methylideneamino]imidazole-4-carboxamide = 5-[(5-phospho-1-deoxy-D-ribulos-1-ylimino)methylamino]-1-(5-phospho-beta-D-ribosyl)imidazole-4-carboxamide. It functions in the pathway amino-acid biosynthesis; L-histidine biosynthesis; L-histidine from 5-phospho-alpha-D-ribose 1-diphosphate: step 4/9. This Desulforamulus reducens (strain ATCC BAA-1160 / DSM 100696 / MI-1) (Desulfotomaculum reducens) protein is 1-(5-phosphoribosyl)-5-[(5-phosphoribosylamino)methylideneamino] imidazole-4-carboxamide isomerase.